Reading from the N-terminus, the 210-residue chain is Endonuclease III (210 aa).

One can recognise a HhH domain in the interval 108–127 (RIELESLPGVGRKTANIILN). Positions 187, 194, 197, and 203 each coordinate [4Fe-4S] cluster.

Belongs to the Nth/MutY family. Requires [4Fe-4S] cluster as cofactor.

It catalyses the reaction 2'-deoxyribonucleotide-(2'-deoxyribose 5'-phosphate)-2'-deoxyribonucleotide-DNA = a 3'-end 2'-deoxyribonucleotide-(2,3-dehydro-2,3-deoxyribose 5'-phosphate)-DNA + a 5'-end 5'-phospho-2'-deoxyribonucleoside-DNA + H(+). In terms of biological role, DNA repair enzyme that has both DNA N-glycosylase activity and AP-lyase activity. The DNA N-glycosylase activity releases various damaged pyrimidines from DNA by cleaving the N-glycosidic bond, leaving an AP (apurinic/apyrimidinic) site. The AP-lyase activity cleaves the phosphodiester bond 3' to the AP site by a beta-elimination, leaving a 3'-terminal unsaturated sugar and a product with a terminal 5'-phosphate. The polypeptide is Endonuclease III (Buchnera aphidicola subsp. Acyrthosiphon pisum (strain APS) (Acyrthosiphon pisum symbiotic bacterium)).